The primary structure comprises 100 residues: NADH-quinone oxidoreductase subunit K 2 (100 aa).

Helical transmembrane passes span L4–I24, I29–L49, and I60–M80.

This sequence belongs to the complex I subunit 4L family. In terms of assembly, NDH-1 is composed of 14 different subunits. Subunits NuoA, H, J, K, L, M, N constitute the membrane sector of the complex.

The protein resides in the cell inner membrane. The enzyme catalyses a quinone + NADH + 5 H(+)(in) = a quinol + NAD(+) + 4 H(+)(out). In terms of biological role, NDH-1 shuttles electrons from NADH, via FMN and iron-sulfur (Fe-S) centers, to quinones in the respiratory chain. The immediate electron acceptor for the enzyme in this species is believed to be ubiquinone. Couples the redox reaction to proton translocation (for every two electrons transferred, four hydrogen ions are translocated across the cytoplasmic membrane), and thus conserves the redox energy in a proton gradient. The chain is NADH-quinone oxidoreductase subunit K 2 from Geobacter metallireducens (strain ATCC 53774 / DSM 7210 / GS-15).